A 303-amino-acid chain; its full sequence is Recombination-associated protein RdgC (303 aa).

It belongs to the RdgC family.

Its subcellular location is the cytoplasm. It localises to the nucleoid. In terms of biological role, may be involved in recombination. This is Recombination-associated protein RdgC from Shewanella frigidimarina (strain NCIMB 400).